Reading from the N-terminus, the 129-residue chain is Small ribosomal subunit protein uS11 (129 aa).

It belongs to the universal ribosomal protein uS11 family. As to quaternary structure, part of the 30S ribosomal subunit. Interacts with proteins S7 and S18. Binds to IF-3.

Functionally, located on the platform of the 30S subunit, it bridges several disparate RNA helices of the 16S rRNA. Forms part of the Shine-Dalgarno cleft in the 70S ribosome. The chain is Small ribosomal subunit protein uS11 from Haemophilus influenzae (strain ATCC 51907 / DSM 11121 / KW20 / Rd).